A 313-amino-acid chain; its full sequence is GTP cyclohydrolase MptA (313 aa).

It belongs to the GTP cyclohydrolase IV family. Homodimer. The cofactor is Fe(2+).

It carries out the reaction GTP + H2O = 7,8-dihydroneopterin 2',3'-cyclic phosphate + formate + diphosphate + H(+). Its pathway is cofactor biosynthesis; 5,6,7,8-tetrahydromethanopterin biosynthesis. In terms of biological role, converts GTP to 7,8-dihydro-D-neopterin 2',3'-cyclic phosphate, the first intermediate in the biosynthesis of coenzyme methanopterin. The protein is GTP cyclohydrolase MptA of Methanosphaera stadtmanae (strain ATCC 43021 / DSM 3091 / JCM 11832 / MCB-3).